We begin with the raw amino-acid sequence, 102 residues long: Putative UPF0320 protein YMR326C (102 aa).

Belongs to the UPF0320 family.

The protein is Putative UPF0320 protein YMR326C of Saccharomyces cerevisiae (strain ATCC 204508 / S288c) (Baker's yeast).